Consider the following 295-residue polypeptide: 4-hydroxy-tetrahydrodipicolinate synthase (295 aa).

Thr-46 is a pyruvate binding site. Tyr-135 serves as the catalytic Proton donor/acceptor. The Schiff-base intermediate with substrate role is filled by Lys-164. A pyruvate-binding site is contributed by Ile-205.

Belongs to the DapA family. Homotetramer; dimer of dimers.

It is found in the cytoplasm. The catalysed reaction is L-aspartate 4-semialdehyde + pyruvate = (2S,4S)-4-hydroxy-2,3,4,5-tetrahydrodipicolinate + H2O + H(+). It participates in amino-acid biosynthesis; L-lysine biosynthesis via DAP pathway; (S)-tetrahydrodipicolinate from L-aspartate: step 3/4. Catalyzes the condensation of (S)-aspartate-beta-semialdehyde [(S)-ASA] and pyruvate to 4-hydroxy-tetrahydrodipicolinate (HTPA). This chain is 4-hydroxy-tetrahydrodipicolinate synthase, found in Wolinella succinogenes (strain ATCC 29543 / DSM 1740 / CCUG 13145 / JCM 31913 / LMG 7466 / NCTC 11488 / FDC 602W) (Vibrio succinogenes).